Here is a 189-residue protein sequence, read N- to C-terminus: Interferon alpha-7 (189 aa).

Positions Met-1–Gly-23 are cleaved as a signal peptide. 2 disulfide bridges follow: Cys-24/Cys-122 and Cys-52/Cys-162.

The protein belongs to the alpha/beta interferon family.

The protein resides in the secreted. In terms of biological role, produced by macrophages, IFN-alpha have antiviral activities. Interferon stimulates the production of two enzymes: a protein kinase and an oligoadenylate synthetase. In Homo sapiens (Human), this protein is Interferon alpha-7 (IFNA7).